The sequence spans 91 residues: MKLTIAIVLVTLTLFCRPASTEVCPSLLYVLGNLIAGTPSSFEATLEPFSPDEDMKEATSQLKTLVDTLSPKAKDSMLELMMKIIQSPECA.

Positions Met-1 to Thr-21 are cleaved as a signal peptide.

The protein belongs to the secretoglobin family. Antiparallel homodimer; disulfide-linked. Interaction with LMBR1L is controversial.

Its subcellular location is the secreted. Binds phosphatidylcholine, phosphatidylinositol, polychlorinated biphenyls (PCB) and weakly progesterone, potent inhibitor of phospholipase A2. The protein is Uteroglobin (SCGB1A1) of Bos taurus (Bovine).